Consider the following 307-residue polypeptide: Thioredoxin-related transmembrane protein 2-B (307 aa).

Residues Met1–Lys19 form the signal peptide. The Extracellular segment spans residues Trp20–Arg111. The helical transmembrane segment at Leu112–Tyr132 threads the bilayer. Residues Tyr132–Lys269 form the Thioredoxin domain. Residues Met133–Lys307 are Cytoplasmic-facing. Positions Gly268 to Lys307 are disordered. Residues Lys269–Ser278 are compositionally biased toward basic and acidic residues. A Di-lysine motif motif is present at residues Lys304–Lys307.

Monomer. Homodimer; disulfide-linked. Occurs in both reduced and oxidized monomeric form. Oxidative conditions increase homodimerization.

It is found in the endoplasmic reticulum membrane. Its subcellular location is the mitochondrion membrane. Functionally, endoplasmic reticulum and mitochondria-associated protein that probably functions as a regulator of cellular redox state and thereby regulates protein post-translational modification, protein folding and mitochondrial activity. The protein is Thioredoxin-related transmembrane protein 2-B (tmx2b) of Danio rerio (Zebrafish).